Consider the following 373-residue polypeptide: MSQHVETKLAQIGNRSDEVTGTVSAPIYLSTAYRHRGIGESTGFDYVRTKNPTRQLVEDAIANLENGARGLAFSSGMAAIQTIMALFKSGDELIVSSDLYGGTYRLFENEWKKYGLTFHYDDFSDEDCLRSKITPNTKAVFVETPTNPLMQEADIEHIARITKEHGLLLIVDNTFYTPVLQRPLELGADIVIHSATKYLGGHNDLLAGLVVVKDERLGEEMFQHQNAIGAVLPPFDSWLLMRGMKTLSLRMRQHQANAQELAAFLEEQEEISDVLYPGKGGMLSFRLQKEEWVNPFLKALKTICFAESLGGVESFITYPATQTHMDIPEEIRIANGVCNRLLRFSVGIEHAEDLKEDLKQALCQVKEGAVSFE.

Lysine 197 carries the post-translational modification N6-(pyridoxal phosphate)lysine.

Belongs to the trans-sulfuration enzymes family. In terms of assembly, homotetramer. Pyridoxal 5'-phosphate is required as a cofactor.

It is found in the cytoplasm. The enzyme catalyses O-acetyl-L-homoserine + L-cysteine = L,L-cystathionine + acetate + H(+). It carries out the reaction O-acetyl-L-homoserine + hydrogen sulfide = L-homocysteine + acetate. Its pathway is amino-acid biosynthesis; L-methionine biosynthesis via de novo pathway. In terms of biological role, catalyzes the formation of L-cystathionine from O-acetyl-L-homoserine and L-cysteine. Cannot use O-succinyl-L-homoserine as substrate. Also exhibits O-acetylhomoserine thiolyase activity, catalyzing the synthesis of L-homocysteine from O-acetyl-L-homoserine and sulfide. The polypeptide is Cystathionine gamma-synthase/O-acetylhomoserine (thiol)-lyase (metI) (Bacillus subtilis (strain 168)).